The sequence spans 632 residues: Chaperone protein DnaK (632 aa).

Thr199 carries the phosphothreonine; by autocatalysis modification. The segment covering 597–611 (AAQQAGQAEGQAAQE) has biased composition (low complexity). The segment at 597 to 632 (AAQQAGQAEGQAAQEPSQSTGNAQAEATDAEYEEVK) is disordered. The segment covering 612–621 (PSQSTGNAQA) has biased composition (polar residues).

The protein belongs to the heat shock protein 70 family.

In terms of biological role, acts as a chaperone. In Amoebophilus asiaticus (strain 5a2), this protein is Chaperone protein DnaK.